The following is a 250-amino-acid chain: tRNA (guanine-N(1)-)-methyltransferase (250 aa).

Residues glycine 115 and 135 to 140 (LGDFVL) each bind S-adenosyl-L-methionine.

This sequence belongs to the RNA methyltransferase TrmD family. In terms of assembly, homodimer.

It is found in the cytoplasm. The catalysed reaction is guanosine(37) in tRNA + S-adenosyl-L-methionine = N(1)-methylguanosine(37) in tRNA + S-adenosyl-L-homocysteine + H(+). Functionally, specifically methylates guanosine-37 in various tRNAs. This Legionella pneumophila (strain Lens) protein is tRNA (guanine-N(1)-)-methyltransferase.